The chain runs to 323 residues: Sphingolipid delta(4)-desaturase DES1 (323 aa).

Residue G2 is the site of N-myristoyl glycine attachment. 2 helical membrane-spanning segments follow: residues 41 to 61 (PNLI…FYIV) and 68 to 88 (WVIF…TLGI). A Histidine box-1 motif is present at residues 89 to 93 (HEIAH). Residues 107 to 127 (WFGMFANLPIGIPYSVSFKSY) form a helical membrane-spanning segment. A Histidine box-2 motif is present at residues 128 to 132 (HMDHH). The next 3 helical transmembrane spans lie at 152–172 (FFCT…FYAF), 184–204 (YLEV…YYFL), and 209–229 (LVYM…SGHF). Positions 259–263 (HNEHH) match the Histidine box-3 motif. S307 is modified (phosphoserine).

The protein belongs to the fatty acid desaturase type 1 family. DEGS subfamily. As to quaternary structure, interacts with RLBP1; the interaction increases synthesis of chromophore-precursors by DEGS1. In terms of processing, myristoylation can target the enzyme to the mitochondria leading to an increase in ceramide levels.

The protein resides in the mitochondrion membrane. It is found in the endoplasmic reticulum membrane. The catalysed reaction is an N-acylsphinganine + 2 Fe(II)-[cytochrome b5] + O2 + 2 H(+) = an N-acylsphing-4-enine + 2 Fe(III)-[cytochrome b5] + 2 H2O. It catalyses the reaction all-trans-retinol = 11-cis-retinol. The enzyme catalyses all-trans-retinol = 9-cis-retinol. It carries out the reaction all-trans-retinol = 13-cis-retinol. The catalysed reaction is 11-cis-retinol = 13-cis-retinol. It catalyses the reaction 11-cis-retinol = 9-cis-retinol. Functionally, has sphingolipid-delta-4-desaturase activity. Converts D-erythro-sphinganine to D-erythro-sphingosine (E-sphing-4-enine). Catalyzes the equilibrium isomerization of retinols. The sequence is that of Sphingolipid delta(4)-desaturase DES1 (DEGS1) from Pongo abelii (Sumatran orangutan).